A 214-amino-acid polypeptide reads, in one-letter code: MVAITHTPKLKHLDKLLAHCHRRRYTAKSTIIYAGDRCETLFFIIKGSVTILIEDDDGREMIIGYLNSGDFFGELGLFEKEGSEQERSAWVRAKVECEVAEISYAKFRELSQQDSEILYTLGSQMADRLRKTTRKVGDLAFLDVTGRVARTLLDLCQQPDAMTHPDGMQIKITRQEIGRIVGCSREMVGRVLKSLEEQGLVHVKGKTMVVFGTR.

Residues 59-60, 73-75, 87-88, 132-133, Arg179, and Arg185 contribute to the 3',5'-cyclic AMP site; these read RE, GEL, RS, and TT. Residues 142 to 214 enclose the HTH crp-type domain; the sequence is LDVTGRVART…GKTMVVFGTR (73 aa). A DNA-binding region (H-T-H motif) is located at residues 174-193; sequence RQEIGRIVGCSREMVGRVLK.

Homodimer.

Its function is as follows. Global cAMP-dependent transcriptional regulator that controls virulence gene expression by distinct cAMP-dependent and -independent mechanisms, which allow to fine tune its virulence program in response to specific host cues or environments. Controls the expression of many regulatory targets including type II, type III and type IV secretion systems, flagellar-mediated motility, and quorum sensing systems. Transcriptional control is exerted by binding to a well-characterized consensus site (5'-ANWWTGNGAWNYAGWTCACAT) within target promoters. Directly binds to the toxA upstream region to regulate exotoxin A production, to the lasR gene promoter to activate the las quorum-sensing system or to the exsA promoter to regulate type III secretion system. Autoregulates as well its own expression. This chain is cAMP-activated global transcriptional regulator Vfr (vfr), found in Pseudomonas aeruginosa (strain ATCC 15692 / DSM 22644 / CIP 104116 / JCM 14847 / LMG 12228 / 1C / PRS 101 / PAO1).